A 395-amino-acid polypeptide reads, in one-letter code: RNA pseudouridine synthase 7 (395 aa).

The segment at 1 to 21 (MKRKQQEDDNDDGVEKAVSPV) is disordered. An S4 RNA-binding domain is found at 74–136 (KTIVDLFADE…HEPPVMIDDV (63 aa)). Aspartate 187 is an active-site residue. Polar residues predominate over residues 244–255 (EGRSTAEDANSS). Positions 244 to 263 (EGRSTAEDANSSGDDKKVKG) are disordered.

This sequence belongs to the pseudouridine synthase RluA family.

The enzyme catalyses a uridine in RNA = a pseudouridine in RNA. The sequence is that of RNA pseudouridine synthase 7 from Arabidopsis thaliana (Mouse-ear cress).